Reading from the N-terminus, the 60-residue chain is UPF0434 protein mma_2578 (60 aa).

The protein belongs to the UPF0434 family.

The protein is UPF0434 protein mma_2578 of Janthinobacterium sp. (strain Marseille) (Minibacterium massiliensis).